We begin with the raw amino-acid sequence, 471 residues long: Exoglucanase 2 (471 aa).

Residues 1–18 (MIVGILTTLATLATLAAS) form the signal peptide. The propeptide occupies 19–24 (VPLEER). At glutamine 25 the chain carries Pyrrolidone carboxylic acid. In terms of domain architecture, CBM1 spans 26–62 (ACSSVWGQCGGQNWSGPTCCASGSTCVYSNDYYSQCL). Low complexity predominate over residues 64–101 (GAASSSSSTRAASTTSRVSPTTSRSSSATPPPGSTTTR). Residues 64–108 (GAASSSSSTRAASTTSRVSPTTSRSSSATPPPGSTTTRVPPVGSG) are disordered. A linker region spans residues 66–106 (ASSSSSTRAASTTSRVSPTTSRSSSATPPPGSTTTRVPPVG). A catalytic region spans residues 107-471 (SGTATYSGNP…LLTNANPSFL (365 aa)). 2 O-linked (Man...) threonine glycosylation sites follow: threonine 111 and threonine 121. Serine 130, serine 133, serine 134, and serine 139 each carry an O-linked (Man...) serine glycan. An O-linked (Man...) threonine glycan is attached at threonine 146. Cysteine 200 and cysteine 259 form a disulfide bridge. The active-site Proton donor is the aspartate 245. Asparagine 313 carries an N-linked (GlcNAc) asparagine glycan. N-linked (GlcNAc...) (high mannose) asparagine glycosylation is present at asparagine 334. An intrachain disulfide couples cysteine 392 to cysteine 439.

It belongs to the glycosyl hydrolase 6 (cellulase B) family. In terms of processing, asn-334 contains mainly a high-mannose-type glycan (Hex(7-9)GlcNAc(2)) in a 3:1 ration with a single GlcNAc. Asn-313 was primarily unglycosylated with a small fraction (18%) bearing a single GlcNAc at this site.

The protein localises to the secreted. The catalysed reaction is Hydrolysis of (1-&gt;4)-beta-D-glucosidic linkages in cellulose and cellotetraose, releasing cellobiose from the non-reducing ends of the chains.. Functionally, exocellobiohydrolases (CBH) that catalyzes the hydrolysis of 1,4-beta-D-glucosidic bonds in cellulose to release the disaccharide cellobiose. The degradation of cellulose involves an interplay between different cellulolytic enzymes. Hydrolysis starts with endoglucanases (EGs), which cut internal beta-1,4-glucosidic bonds in cellulose to reduce the polymerization degree of the substrate and create new chain ends for exocellobiohydrolases (CBHs). The CBHs release the disaccharide cellobiose from the non-reducing end of the cellulose polymer chain. Finally, beta-1,4-glucosidases hydrolyze the cellobiose and other short cello-oligosaccharides into glucose units. This chain is Exoglucanase 2 (cbh2), found in Hypocrea jecorina (Trichoderma reesei).